The chain runs to 316 residues: Pantothenate kinase (316 aa).

95–102 contributes to the ATP binding site; the sequence is GSVAVGKS.

The protein belongs to the prokaryotic pantothenate kinase family.

It is found in the cytoplasm. The enzyme catalyses (R)-pantothenate + ATP = (R)-4'-phosphopantothenate + ADP + H(+). Its pathway is cofactor biosynthesis; coenzyme A biosynthesis; CoA from (R)-pantothenate: step 1/5. This chain is Pantothenate kinase, found in Yersinia enterocolitica serotype O:8 / biotype 1B (strain NCTC 13174 / 8081).